Consider the following 375-residue polypeptide: Myb family transcription factor PHL5 (375 aa).

Residues 159-171 are compositionally biased toward polar residues; sequence TSSQHQPKQSHPR. Positions 159-178 are disordered; the sequence is TSSQHQPKQSHPRFSSPPSF. One can recognise an HTH myb-type domain in the interval 189 to 249; the sequence is CVNKTRIRWT…HLQKYRIAKY (61 aa). Positions 220-245 form a DNA-binding region, H-T-H motif; sequence PKAILKRMDSDGLTIFHVKSHLQKYR. Residues 279–299 adopt a coiled-coil conformation; the sequence is KEALQLQLDVQRHLHEQLEIQ. The short motif at 292–297 is the LHEQLE element; sequence LHEQLE.

This sequence belongs to the MYB-CC family.

Its subcellular location is the nucleus. This Arabidopsis thaliana (Mouse-ear cress) protein is Myb family transcription factor PHL5.